A 428-amino-acid polypeptide reads, in one-letter code: Chaperone SurA (428 aa).

An N-terminal signal peptide occupies residues Met1–Ala13. PpiC domains are found at residues Ser164 to Glu265 and Arg276 to Gly375. The tract at residues Thr211–Ala230 is disordered.

The protein resides in the periplasm. It carries out the reaction [protein]-peptidylproline (omega=180) = [protein]-peptidylproline (omega=0). Functionally, chaperone involved in the correct folding and assembly of outer membrane proteins. Recognizes specific patterns of aromatic residues and the orientation of their side chains, which are found more frequently in integral outer membrane proteins. May act in both early periplasmic and late outer membrane-associated steps of protein maturation. The sequence is that of Chaperone SurA from Pseudomonas syringae pv. syringae (strain B728a).